Reading from the N-terminus, the 443-residue chain is tRNA modification GTPase MnmE (443 aa).

Arg-23, Glu-82, and Lys-121 together coordinate (6S)-5-formyl-5,6,7,8-tetrahydrofolate. The region spanning 215-364 is the TrmE-type G domain; sequence GTSIVLAGHP…LKQFIQKWMQ (150 aa). Position 225 (Asn-225) interacts with K(+). GTP is bound by residues 225 to 230, 244 to 250, and 269 to 272; these read NVGKSS, TDIPGTT, and DSAG. Residue Ser-229 participates in Mg(2+) binding. 3 residues coordinate K(+): Thr-244, Ile-246, and Thr-249. Thr-250 lines the Mg(2+) pocket. Lys-443 serves as a coordination point for (6S)-5-formyl-5,6,7,8-tetrahydrofolate.

Belongs to the TRAFAC class TrmE-Era-EngA-EngB-Septin-like GTPase superfamily. TrmE GTPase family. Homodimer. Heterotetramer of two MnmE and two MnmG subunits. Requires K(+) as cofactor.

The protein resides in the cytoplasm. Its function is as follows. Exhibits a very high intrinsic GTPase hydrolysis rate. Involved in the addition of a carboxymethylaminomethyl (cmnm) group at the wobble position (U34) of certain tRNAs, forming tRNA-cmnm(5)s(2)U34. This chain is tRNA modification GTPase MnmE, found in Chlamydia caviae (strain ATCC VR-813 / DSM 19441 / 03DC25 / GPIC) (Chlamydophila caviae).